Reading from the N-terminus, the 173-residue chain is Cytochrome c-type biogenesis protein CcmE (173 aa).

Residues 1–8 are Cytoplasmic-facing; the sequence is MNPRRKSR. Residues 9-29 form a helical; Signal-anchor for type II membrane protein membrane-spanning segment; the sequence is FKLVIFVVLGIAIASGLMLYA. The Periplasmic segment spans residues 30 to 173; the sequence is LRQNIDLFYT…RDRQEKEGAK (144 aa). Positions 131 and 135 each coordinate heme. The interval 152-173 is disordered; sequence GIKAADLKGESARDRQEKEGAK. Over residues 156 to 173 the composition is skewed to basic and acidic residues; it reads ADLKGESARDRQEKEGAK.

This sequence belongs to the CcmE/CycJ family.

The protein localises to the cell inner membrane. Its function is as follows. Heme chaperone required for the biogenesis of c-type cytochromes. Transiently binds heme delivered by CcmC and transfers the heme to apo-cytochromes in a process facilitated by CcmF and CcmH. The protein is Cytochrome c-type biogenesis protein CcmE of Haemophilus influenzae (strain PittEE).